Here is a 786-residue protein sequence, read N- to C-terminus: Aculeacin-A acylase (786 aa).

A signal peptide spans 1 to 22; sequence MTSSYMRLKAAAIAFGVIVATA. Positions 23–34 are excised as a propeptide; the sequence is AVPSPASGREHD. The interval 35–130 is substrate-binding; sequence GGYAALIRRA…PRDGVRAPCD (96 aa). The propeptide at 215–229 is spacer peptide; that stretch reads AAIAAALDGTSAGIG. Residues 220–239 are possible recognition-sequence of an AAC processing enzyme; that stretch reads ALDGTSAGIGSNAYGLGAQA. The active-site Nucleophile is the serine 230. A disordered region spans residues 658–689; that stretch reads ACNGSPASPSTRSVGDIHTDSRGERRIPIHGG. Residues 672–684 are compositionally biased toward basic and acidic residues; that stretch reads GDIHTDSRGERRI.

Belongs to the peptidase S45 family. Heterodimer of a small subunit and a large subunit processed from the same precursor.

It is found in the secreted. Catalyzes the hydrolysis of the palmitoyl moiety of the antifungal antibiotic, aculeacin-A, giving a hexapeptide moiety and a long chain fatty acid. This Actinoplanes utahensis protein is Aculeacin-A acylase (aac).